A 216-amino-acid chain; its full sequence is Ribosomal RNA large subunit methyltransferase E (216 aa).

Glycine 67, tryptophan 69, aspartate 87, aspartate 103, and aspartate 128 together coordinate S-adenosyl-L-methionine. Lysine 168 serves as the catalytic Proton acceptor.

Belongs to the class I-like SAM-binding methyltransferase superfamily. RNA methyltransferase RlmE family.

It is found in the cytoplasm. The catalysed reaction is uridine(2552) in 23S rRNA + S-adenosyl-L-methionine = 2'-O-methyluridine(2552) in 23S rRNA + S-adenosyl-L-homocysteine + H(+). Its function is as follows. Specifically methylates the uridine in position 2552 of 23S rRNA at the 2'-O position of the ribose in the fully assembled 50S ribosomal subunit. The chain is Ribosomal RNA large subunit methyltransferase E from Acinetobacter baumannii (strain AB307-0294).